A 426-amino-acid chain; its full sequence is Serine--tRNA ligase (426 aa).

230 to 232 lines the L-serine pocket; the sequence is TAE. 261-263 is a binding site for ATP; it reads RSE. E284 is an L-serine binding site. 348–351 serves as a coordination point for ATP; it reads EISS. S384 contacts L-serine.

It belongs to the class-II aminoacyl-tRNA synthetase family. Type-1 seryl-tRNA synthetase subfamily. In terms of assembly, homodimer. The tRNA molecule binds across the dimer.

The protein localises to the cytoplasm. The enzyme catalyses tRNA(Ser) + L-serine + ATP = L-seryl-tRNA(Ser) + AMP + diphosphate + H(+). It catalyses the reaction tRNA(Sec) + L-serine + ATP = L-seryl-tRNA(Sec) + AMP + diphosphate + H(+). It participates in aminoacyl-tRNA biosynthesis; selenocysteinyl-tRNA(Sec) biosynthesis; L-seryl-tRNA(Sec) from L-serine and tRNA(Sec): step 1/1. Its function is as follows. Catalyzes the attachment of serine to tRNA(Ser). Is also able to aminoacylate tRNA(Sec) with serine, to form the misacylated tRNA L-seryl-tRNA(Sec), which will be further converted into selenocysteinyl-tRNA(Sec). The protein is Serine--tRNA ligase of Phenylobacterium zucineum (strain HLK1).